We begin with the raw amino-acid sequence, 354 residues long: N-acetyl-gamma-glutamyl-phosphate reductase (354 aa).

Cys156 is a catalytic residue.

Belongs to the NAGSA dehydrogenase family. Type 1 subfamily.

The protein resides in the cytoplasm. The enzyme catalyses N-acetyl-L-glutamate 5-semialdehyde + phosphate + NADP(+) = N-acetyl-L-glutamyl 5-phosphate + NADPH + H(+). The protein operates within amino-acid biosynthesis; L-arginine biosynthesis; N(2)-acetyl-L-ornithine from L-glutamate: step 3/4. In terms of biological role, catalyzes the NADPH-dependent reduction of N-acetyl-5-glutamyl phosphate to yield N-acetyl-L-glutamate 5-semialdehyde. This Bordetella bronchiseptica (strain ATCC BAA-588 / NCTC 13252 / RB50) (Alcaligenes bronchisepticus) protein is N-acetyl-gamma-glutamyl-phosphate reductase.